The chain runs to 626 residues: DNA mismatch repair protein MutL (626 aa).

Disordered regions lie at residues 385–413 (SGAS…PSMV) and 418–437 (LTPS…VAPD).

It belongs to the DNA mismatch repair MutL/HexB family.

This protein is involved in the repair of mismatches in DNA. It is required for dam-dependent methyl-directed DNA mismatch repair. May act as a 'molecular matchmaker', a protein that promotes the formation of a stable complex between two or more DNA-binding proteins in an ATP-dependent manner without itself being part of a final effector complex. This Chlorobaculum parvum (strain DSM 263 / NCIMB 8327) (Chlorobium vibrioforme subsp. thiosulfatophilum) protein is DNA mismatch repair protein MutL.